The primary structure comprises 244 residues: 3-oxoacyl-[acyl-carrier-protein] reductase FabG (244 aa).

Residues 12–15 (GASR) and threonine 37 contribute to the NADP(+) site. 2 residues coordinate Ca(2+): glycine 50 and glycine 53. NADP(+)-binding positions include 59–60 (NV) and asparagine 86. Residue serine 138 participates in substrate binding. Residue asparagine 145 participates in Ca(2+) binding. Tyrosine 151 acts as the Proton acceptor in catalysis. Residues 151–155 (YAAAK) and isoleucine 184 contribute to the NADP(+) site. The Ca(2+) site is built by glutamate 233 and threonine 234.

Belongs to the short-chain dehydrogenases/reductases (SDR) family. In terms of assembly, homotetramer.

The enzyme catalyses a (3R)-hydroxyacyl-[ACP] + NADP(+) = a 3-oxoacyl-[ACP] + NADPH + H(+). The protein operates within lipid metabolism; fatty acid biosynthesis. Its function is as follows. Catalyzes the NADPH-dependent reduction of beta-ketoacyl-ACP substrates to beta-hydroxyacyl-ACP products, the first reductive step in the elongation cycle of fatty acid biosynthesis. The polypeptide is 3-oxoacyl-[acyl-carrier-protein] reductase FabG (fabG) (Salmonella typhi).